The following is a 342-amino-acid chain: Homocysteine S-methyltransferase 4 (342 aa).

Residues 13–328 (ALRGFVREAG…ATVRAIARAV (316 aa)) enclose the Hcy-binding domain. Zn(2+)-binding residues include C245, C313, and C314.

Monomer. Requires Zn(2+) as cofactor.

The catalysed reaction is S-methyl-L-methionine + L-homocysteine = 2 L-methionine + H(+). In terms of biological role, catalyzes methyl transfer from S-methylmethionine (SMM) to adenosyl-L-homocysteine (AdoMet). SMM degradation (by HMT-1, HMT-2, HMT-3 and HMT-4) and biosynthesis (by MMT1) constitute the SMM cycle in plants, which is probably required to achieve short term control of AdoMet level. This chain is Homocysteine S-methyltransferase 4 (HMT-4), found in Zea mays (Maize).